A 470-amino-acid polypeptide reads, in one-letter code: Light-independent protochlorophyllide reductase subunit N (470 aa).

Residues cysteine 23, cysteine 48, and cysteine 108 each coordinate [4Fe-4S] cluster.

It belongs to the BchN/ChlN family. Protochlorophyllide reductase is composed of three subunits; ChlL, ChlN and ChlB. Forms a heterotetramer of two ChlB and two ChlN subunits. [4Fe-4S] cluster is required as a cofactor.

It is found in the plastid. The protein resides in the chloroplast. The catalysed reaction is chlorophyllide a + oxidized 2[4Fe-4S]-[ferredoxin] + 2 ADP + 2 phosphate = protochlorophyllide a + reduced 2[4Fe-4S]-[ferredoxin] + 2 ATP + 2 H2O. The protein operates within porphyrin-containing compound metabolism; chlorophyll biosynthesis (light-independent). Component of the dark-operative protochlorophyllide reductase (DPOR) that uses Mg-ATP and reduced ferredoxin to reduce ring D of protochlorophyllide (Pchlide) to form chlorophyllide a (Chlide). This reaction is light-independent. The NB-protein (ChlN-ChlB) is the catalytic component of the complex. The polypeptide is Light-independent protochlorophyllide reductase subunit N (Zygnema circumcarinatum (Green alga)).